The primary structure comprises 289 residues: Protease HtpX homolog (289 aa).

The next 2 membrane-spanning stretches (helical) occupy residues 11-31 and 34-54; these read AALFGVLWAVLLGLGAIIAAG and STTPIWIMALIGVATTAYGYW. His138 lines the Zn(2+) pocket. Residue Glu139 is part of the active site. His142 contributes to the Zn(2+) binding site. 2 consecutive transmembrane segments (helical) span residues 152-172 and 182-202; these read SVVAAVAGVITSVGQMLLIFG and LATIAMALLAPFAASLIQMAI. A Zn(2+)-binding site is contributed by Glu207.

Belongs to the peptidase M48B family. The cofactor is Zn(2+).

It localises to the cell membrane. The chain is Protease HtpX homolog from Paenarthrobacter aurescens (strain TC1).